A 414-amino-acid chain; its full sequence is Isocitrate dehydrogenase [NADP] cytoplasmic (414 aa).

At S2 the chain carries N-acetylserine. Y42 carries the phosphotyrosine modification. 75-77 (TIT) lines the NADP(+) pocket. T77 provides a ligand contact to substrate. K81 bears the N6-acetyllysine mark. R82 provides a ligand contact to NADP(+). Substrate contacts are provided by residues 94 to 100 (SPNGTIR) and R109. N6-succinyllysine is present on K126. Residues R132 and K212 each contribute to the substrate site. An N6-acetyllysine mark is found at K224 and K233. Residue D252 coordinates Mn(2+). K260 is a binding site for NADP(+). 2 residues coordinate Mn(2+): D275 and D279. An NADP(+)-binding site is contributed by 310–315 (GTVTRH). K321 is modified (N6-acetyllysine). NADP(+) is bound at residue N328. A Phosphoserine modification is found at S389. K400 carries the N6-succinyllysine modification.

The protein belongs to the isocitrate and isopropylmalate dehydrogenases family. In terms of assembly, homodimer. The cofactor is Mg(2+). Mn(2+) serves as cofactor. Acetylation at Lys-374 dramatically reduces catalytic activity.

The protein localises to the cytoplasm. It is found in the cytosol. The enzyme catalyses D-threo-isocitrate + NADP(+) = 2-oxoglutarate + CO2 + NADPH. Its function is as follows. Catalyzes the NADP(+)-dependent oxidative decarboxylation of isocitrate (D-threo-isocitrate) to 2-ketoglutarate (2-oxoglutarate), which is required by other enzymes such as the phytanoyl-CoA dioxygenase. Plays a critical role in the generation of NADPH, an important cofactor in many biosynthesis pathways. May act as a corneal epithelial crystallin and may be involved in maintaining corneal epithelial transparency. The sequence is that of Isocitrate dehydrogenase [NADP] cytoplasmic (IDH1) from Ovis aries (Sheep).